A 1040-amino-acid chain; its full sequence is Multidrug resistance protein MdtB (1040 aa).

Transmembrane regions (helical) follow at residues 16 to 36 (FIMR…AGII), 342 to 362 (DTQF…YLFL), 369 to 389 (IIPG…MVFL), 396 to 416 (LTLM…IVVI), 440 to 460 (IGFT…PLLF), 472 to 492 (FAVT…TLTP), 537 to 557 (WLTL…WVFI), 863 to 883 (LGST…VLGV), 888 to 908 (FIHP…ALLA), 911 to 931 (LAGS…IGIV), 968 to 988 (ILMT…STGV), and 998 to 1018 (IGMV…TPVI).

It belongs to the resistance-nodulation-cell division (RND) (TC 2.A.6) family. MdtB subfamily. As to quaternary structure, part of a tripartite efflux system composed of MdtA, MdtB and MdtC. MdtB forms a heteromultimer with MdtC.

Its subcellular location is the cell inner membrane. In Klebsiella pneumoniae (strain 342), this protein is Multidrug resistance protein MdtB.